The sequence spans 1110 residues: Serine/threonine-protein kinase PknK (1110 aa).

The Protein kinase domain occupies 26 to 283 (FDNVEEIGRG…TAADVGEELR (258 aa)). Residues 32–40 (IGRGGFGVV) and lysine 55 each bind ATP. The Proton acceptor role is filled by aspartate 149. Mg(2+)-binding residues include asparagine 154 and aspartate 167. Phosphothreonine; by autocatalysis occurs at positions 179 and 181. The tract at residues 308-343 (RSPEAHAAHRHTGGGTPTVPTPPTPATKYRPSVPTG) is disordered.

The protein belongs to the protein kinase superfamily. Ser/Thr protein kinase family. As to quaternary structure, forms oligomeric complexes in solution. In terms of processing, can autophosphorylate the carboxyl terminal region in addition to Thr-179 and Thr-181.

The protein resides in the cytoplasm. The protein localises to the cell membrane. It is found in the secreted. Its subcellular location is the cell wall. It catalyses the reaction L-seryl-[protein] + ATP = O-phospho-L-seryl-[protein] + ADP + H(+). The catalysed reaction is L-threonyl-[protein] + ATP = O-phospho-L-threonyl-[protein] + ADP + H(+). Key microbial factor involved in regulation of early and late events in tuberculosis infection, and in host-pathogen interactions. This is Serine/threonine-protein kinase PknK (pknK) from Mycobacterium tuberculosis (strain CDC 1551 / Oshkosh).